Reading from the N-terminus, the 360-residue chain is UDP-N-acetylglucosamine--N-acetylmuramyl-(pentapeptide) pyrophosphoryl-undecaprenol N-acetylglucosamine transferase (360 aa).

UDP-N-acetyl-alpha-D-glucosamine-binding positions include 11–13 (TGG), Asn-117, Arg-160, Ser-192, and Gln-294.

It belongs to the glycosyltransferase 28 family. MurG subfamily.

It localises to the cell inner membrane. The enzyme catalyses di-trans,octa-cis-undecaprenyl diphospho-N-acetyl-alpha-D-muramoyl-L-alanyl-D-glutamyl-meso-2,6-diaminopimeloyl-D-alanyl-D-alanine + UDP-N-acetyl-alpha-D-glucosamine = di-trans,octa-cis-undecaprenyl diphospho-[N-acetyl-alpha-D-glucosaminyl-(1-&gt;4)]-N-acetyl-alpha-D-muramoyl-L-alanyl-D-glutamyl-meso-2,6-diaminopimeloyl-D-alanyl-D-alanine + UDP + H(+). The protein operates within cell wall biogenesis; peptidoglycan biosynthesis. In terms of biological role, cell wall formation. Catalyzes the transfer of a GlcNAc subunit on undecaprenyl-pyrophosphoryl-MurNAc-pentapeptide (lipid intermediate I) to form undecaprenyl-pyrophosphoryl-MurNAc-(pentapeptide)GlcNAc (lipid intermediate II). The protein is UDP-N-acetylglucosamine--N-acetylmuramyl-(pentapeptide) pyrophosphoryl-undecaprenol N-acetylglucosamine transferase of Rickettsia felis (strain ATCC VR-1525 / URRWXCal2) (Rickettsia azadi).